A 145-amino-acid polypeptide reads, in one-letter code: Class I hydrophobin 1 (145 aa).

Positions 1–19 are cleaved as a signal peptide; sequence MKFSYAIAAVVAAAASVQA. 4 disulfides stabilise this stretch: Cys65/Cys126, Cys72/Cys120, Cys73/Cys106, and Cys127/Cys140. 2 N-linked (GlcNAc...) asparagine glycosylation sites follow: Asn80 and Asn129.

This sequence belongs to the fungal hydrophobin family. Self-assembles to form functional amyloid fibrils called rodlets. Self-assembly into fibrillar rodlets occurs spontaneously at hydrophobic:hydrophilic interfaces and the rodlets further associate laterally to form amphipathic monolayers.

Its subcellular location is the secreted. The protein localises to the cell wall. Its function is as follows. Aerial growth, conidiation, and dispersal of filamentous fungi in the environment rely upon a capability of their secreting small amphipathic proteins called hydrophobins (HPBs) with low sequence identity. Class I can self-assemble into an outermost layer of rodlet bundles on aerial cell surfaces, conferring cellular hydrophobicity that supports fungal growth, development and dispersal; whereas Class II form highly ordered films at water-air interfaces through intermolecular interactions but contribute nothing to the rodlet structure. Hyd1 is a class I hydrophobin that is crucial for the initiation of primordia formation. Plays also important roles in nitrogen regulation and resistance to abiotic stresses. This Ganoderma lucidum (Ling zhi medicinal fungus) protein is Class I hydrophobin 1.